A 154-amino-acid polypeptide reads, in one-letter code: Cytochrome c-type biogenesis protein CcmE (154 aa).

The Cytoplasmic segment spans residues 1-7 (MKPRQKR). The chain crosses the membrane as a helical; Signal-anchor for type II membrane protein span at residues 8–28 (LVLIVGIVAAVGVAAALVLNA). Over 29-154 (FQSNLVFFYS…GETVVKETRP (126 aa)) the chain is Periplasmic. Heme is bound by residues H121 and Y125. Residues 131–154 (AEALQRAGASNQKLGETVVKETRP) form a disordered region.

It belongs to the CcmE/CycJ family.

It localises to the cell inner membrane. Functionally, heme chaperone required for the biogenesis of c-type cytochromes. Transiently binds heme delivered by CcmC and transfers the heme to apo-cytochromes in a process facilitated by CcmF and CcmH. This Methylibium petroleiphilum (strain ATCC BAA-1232 / LMG 22953 / PM1) protein is Cytochrome c-type biogenesis protein CcmE.